A 705-amino-acid polypeptide reads, in one-letter code: Polyphosphate kinase (705 aa).

Asn58 contributes to the ATP binding site. 2 residues coordinate Mg(2+): Arg389 and Arg419. The active-site Phosphohistidine intermediate is His449. Tyr482, Arg578, and His606 together coordinate ATP.

The protein belongs to the polyphosphate kinase 1 (PPK1) family. Requires Mg(2+) as cofactor. Post-translationally, an intermediate of this reaction is the autophosphorylated ppk in which a phosphate is covalently linked to a histidine residue through a N-P bond.

The enzyme catalyses [phosphate](n) + ATP = [phosphate](n+1) + ADP. In terms of biological role, catalyzes the reversible transfer of the terminal phosphate of ATP to form a long-chain polyphosphate (polyP). This Halalkalibacterium halodurans (strain ATCC BAA-125 / DSM 18197 / FERM 7344 / JCM 9153 / C-125) (Bacillus halodurans) protein is Polyphosphate kinase.